Here is a 374-residue protein sequence, read N- to C-terminus: MGEFDREELTIIRKFEHIEHCLKRNVQAHVTNGFEDVHFVHMSLPEIDKDEIDLSVEFLGRKFDYPIFIAGMTGGTKGSQLAGRINKTLAKAAQELNIPMGVGSQRAMIRKPETWESYYVRDVAPDVFLVGNLGAPQFSETIRERYGLEEALKAVETIQADALAIHMNPLQESVQPEGDTQYRGVLKALAELKAEFPYPIIAKETGAGVSMEVAVRLESIGIDAIDVGGLGGTSWSGVEYYRAKDEIGKDLALRFWDWGIKTAISVAEVRYATELPIIATGGMRDGIAMAKALAMGATFAGVALPLLKPAVKGDVEGVIKILRRYIEEIRNAMFLVGARNVEELRKVPLVITGFTREWLEQRIDLPSYLRNRGI.

A substrate-binding site is contributed by 13–14 (RK). FMN is bound by residues 71–73 (GMT), Ser104, and Asn132. 104–106 (SQR) serves as a coordination point for substrate. Gln171 provides a ligand contact to substrate. Residue Glu172 participates in Mg(2+) binding. FMN is bound by residues Lys203, Thr233, 282 to 284 (GMR), and 303 to 304 (AL).

It belongs to the IPP isomerase type 2 family. In terms of assembly, homooctamer. Dimer of tetramers. FMN is required as a cofactor. Requires NADPH as cofactor. It depends on Mg(2+) as a cofactor.

It is found in the cytoplasm. It catalyses the reaction isopentenyl diphosphate = dimethylallyl diphosphate. Functionally, involved in the biosynthesis of isoprenoids. Catalyzes the 1,3-allylic rearrangement of the homoallylic substrate isopentenyl (IPP) to its allylic isomer, dimethylallyl diphosphate (DMAPP). The sequence is that of Isopentenyl-diphosphate delta-isomerase from Thermococcus kodakarensis (strain ATCC BAA-918 / JCM 12380 / KOD1) (Pyrococcus kodakaraensis (strain KOD1)).